We begin with the raw amino-acid sequence, 185 residues long: Protein GrpE (185 aa).

The disordered stretch occupies residues 1–22 (MTASQEPVDQAPESNEPAPAVP).

Belongs to the GrpE family. As to quaternary structure, homodimer.

It localises to the cytoplasm. Its function is as follows. Participates actively in the response to hyperosmotic and heat shock by preventing the aggregation of stress-denatured proteins, in association with DnaK and GrpE. It is the nucleotide exchange factor for DnaK and may function as a thermosensor. Unfolded proteins bind initially to DnaJ; upon interaction with the DnaJ-bound protein, DnaK hydrolyzes its bound ATP, resulting in the formation of a stable complex. GrpE releases ADP from DnaK; ATP binding to DnaK triggers the release of the substrate protein, thus completing the reaction cycle. Several rounds of ATP-dependent interactions between DnaJ, DnaK and GrpE are required for fully efficient folding. This Bordetella petrii (strain ATCC BAA-461 / DSM 12804 / CCUG 43448) protein is Protein GrpE.